The sequence spans 305 residues: NAD-dependent protein deacylase SIR4 (305 aa).

A mitochondrion-targeting transit peptide spans 1–10 (MSAQVMHNRV). Residues 11–305 (MGTVKDSASK…VLEELASTIR (295 aa)) form the Deacetylase sirtuin-type domain. NAD(+) is bound by residues 37–57 (GAGV…GIYS) and 118–121 (QNVD). H139 functions as the Proton acceptor in the catalytic mechanism. Positions 147, 150, 209, and 212 each coordinate Zn(2+). Residues 249–251 (GSS), 275–277 (NLG), and S293 each bind NAD(+).

It belongs to the sirtuin family. Class II subfamily. Zn(2+) is required as a cofactor.

The protein localises to the mitochondrion matrix. It catalyses the reaction N(6)-acetyl-L-lysyl-[protein] + NAD(+) + H2O = 2''-O-acetyl-ADP-D-ribose + nicotinamide + L-lysyl-[protein]. Its function is as follows. NAD-dependent protein deacylase. Catalyzes the NAD-dependent hydrolysis of acyl groups from lysine residues. The polypeptide is NAD-dependent protein deacylase SIR4 (Batrachochytrium dendrobatidis (strain JAM81 / FGSC 10211) (Frog chytrid fungus)).